A 126-amino-acid polypeptide reads, in one-letter code: Fluoride-specific ion channel FluC (126 aa).

The next 4 membrane-spanning stretches (helical) occupy residues 4–24, 36–56, 67–85, and 101–121; these read LLLV…TSAW, GTLL…TASL, LFLA…SFNY, and AYLL…TLLV. Na(+) contacts are provided by glycine 75 and threonine 78.

Belongs to the fluoride channel Fluc/FEX (TC 1.A.43) family.

It localises to the cell inner membrane. It catalyses the reaction fluoride(in) = fluoride(out). With respect to regulation, na(+) is not transported, but it plays an essential structural role and its presence is essential for fluoride channel function. Functionally, fluoride-specific ion channel. Important for reducing fluoride concentration in the cell, thus reducing its toxicity. The protein is Fluoride-specific ion channel FluC of Anaeromyxobacter dehalogenans (strain 2CP-1 / ATCC BAA-258).